Reading from the N-terminus, the 69-residue chain is VLIIAVLFLTACQLTTAETYSRGRQKHRARRSTDKNSKWTRECTRSGGACNSHDQCCANFCRKATSTCM.

The first 17 residues, Val-1–Ala-17, serve as a signal peptide directing secretion. The propeptide occupies Glu-18–Arg-41. 3 disulfides stabilise this stretch: Cys-43–Cys-57, Cys-50–Cys-61, and Cys-56–Cys-68.

This sequence belongs to the conotoxin O1 superfamily. In terms of tissue distribution, expressed by the venom duct.

The protein localises to the secreted. This is Conotoxin Eb6.19 (E1) from Conus ebraeus (Hebrew cone).